A 1228-amino-acid chain; its full sequence is Calcium-transporting ATPase (1228 aa).

The Cytoplasmic segment spans residues 1–63; the sequence is MEEVIKNAHT…FELILNQFDD (63 aa). The helical transmembrane segment at 64–81 threads the bilayer; it reads LLVKILLLAAFISFVLTL. At 82–92 the chain is on the extracellular side; sequence LDMKHKKIEIC. Residues 93-112 form a helical membrane-spanning segment; it reads DFIEPLVIVLILILNAAVGV. At 113–270 the chain is on the cytoplasmic side; that stretch reads WQECNAEKSL…IDLFGQQLSK (158 aa). The helical transmembrane segment at 271–291 threads the bilayer; sequence IIFVICVTVWIINFKHFSDPI. Residues 292-300 are Extracellular-facing; the sequence is HGSFLYGCL. A helical membrane pass occupies residues 301–321; the sequence is YYFKISVALAVAAIPEGLPAV. Residues 322-974 lie on the Cytoplasmic side of the membrane; the sequence is ITTCLALGTR…IYNNMKAFIR (653 aa). Asp-358 acts as the 4-aspartylphosphate intermediate in catalysis. Disordered regions lie at residues 452 to 478 and 562 to 613; these read MKND…IPLK and MPAE…LKNA. A compositionally biased stretch (polar residues) spans 589–604; the sequence is FFSSKNDNSHITSTLN. Lys-716 contributes to the ATP binding site. A helical membrane pass occupies residues 975 to 994; that stretch reads YLISSNIGEVASIFITALLG. At 995–1000 the chain is on the extracellular side; sequence IPDSLA. A helical membrane pass occupies residues 1001-1021; that stretch reads PVQLLWVNLVTDGLPATALGF. Topologically, residues 1022–1042 are cytoplasmic; that stretch reads NPPEHDVMKCKPRHKNDNLIN. Residues 1043–1067 traverse the membrane as a helical segment; the sequence is GLTLLRYIIIGTYVGIATVSIFVYW. The Extracellular portion of the chain corresponds to 1068–1118; sequence FLFYPDSDMHTLINFYQLSHYNQCKAWNNFRVNKVYDMSEDHCSYFSAGKI. The helical transmembrane segment at 1119–1140 threads the bilayer; that stretch reads KASTLSLSVLVLIEMFNALNAL. Residues 1141–1151 are Cytoplasmic-facing; that stretch reads SEYNSLFEIPP. Residues 1152 to 1172 traverse the membrane as a helical segment; it reads WRNMYLVLATIGSLLLHVLIL. Over 1173–1185 the chain is Extracellular; sequence YIPPLARIFGVVP. Residues 1186–1206 traverse the membrane as a helical segment; it reads LSAYDWFLVFLWSFPVIILDE. The Cytoplasmic segment spans residues 1207–1228; that stretch reads IIKFYAKRKLKEEQRTKKIKID.

Belongs to the cation transport ATPase (P-type) (TC 3.A.3) family.

The protein resides in the membrane. The catalysed reaction is Ca(2+)(in) + ATP + H2O = Ca(2+)(out) + ADP + phosphate + H(+). This magnesium-dependent enzyme catalyzes the hydrolysis of ATP coupled with the transport of the calcium. The protein is Calcium-transporting ATPase (ATP6) of Plasmodium falciparum (isolate K1 / Thailand).